The primary structure comprises 220 residues: Deoxyribose-phosphate aldolase (220 aa).

The active-site Proton donor/acceptor is the D89. K151 functions as the Schiff-base intermediate with acetaldehyde in the catalytic mechanism. K180 serves as the catalytic Proton donor/acceptor.

The protein belongs to the DeoC/FbaB aldolase family. DeoC type 1 subfamily.

Its subcellular location is the cytoplasm. The catalysed reaction is 2-deoxy-D-ribose 5-phosphate = D-glyceraldehyde 3-phosphate + acetaldehyde. The protein operates within carbohydrate degradation; 2-deoxy-D-ribose 1-phosphate degradation; D-glyceraldehyde 3-phosphate and acetaldehyde from 2-deoxy-alpha-D-ribose 1-phosphate: step 2/2. In terms of biological role, catalyzes a reversible aldol reaction between acetaldehyde and D-glyceraldehyde 3-phosphate to generate 2-deoxy-D-ribose 5-phosphate. The chain is Deoxyribose-phosphate aldolase from Streptococcus pneumoniae (strain CGSP14).